A 285-amino-acid polypeptide reads, in one-letter code: Bifunctional protein FolD (285 aa).

NADP(+)-binding positions include 165–167 and serine 190; that span reads GRS.

It belongs to the tetrahydrofolate dehydrogenase/cyclohydrolase family. In terms of assembly, homodimer.

It catalyses the reaction (6R)-5,10-methylene-5,6,7,8-tetrahydrofolate + NADP(+) = (6R)-5,10-methenyltetrahydrofolate + NADPH. It carries out the reaction (6R)-5,10-methenyltetrahydrofolate + H2O = (6R)-10-formyltetrahydrofolate + H(+). It participates in one-carbon metabolism; tetrahydrofolate interconversion. Catalyzes the oxidation of 5,10-methylenetetrahydrofolate to 5,10-methenyltetrahydrofolate and then the hydrolysis of 5,10-methenyltetrahydrofolate to 10-formyltetrahydrofolate. This Burkholderia ambifaria (strain ATCC BAA-244 / DSM 16087 / CCUG 44356 / LMG 19182 / AMMD) (Burkholderia cepacia (strain AMMD)) protein is Bifunctional protein FolD.